A 558-amino-acid polypeptide reads, in one-letter code: EF-hand and coiled-coil domain-containing protein 1 (558 aa).

Residues 43–78 (GLDQYLQEVFHHLDCRGAGRLPRADFRALCAVLGLN) form the EF-hand domain. Basic residues predominate over residues 161–170 (LRRPRRRRRP). 2 disordered regions span residues 161-183 (LRRP…YGER) and 304-395 (RSEG…QPSG). Coiled-coil stretches lie at residues 179 to 304 (AYGE…RGYR) and 453 to 495 (VEAE…LNIS).

The polypeptide is EF-hand and coiled-coil domain-containing protein 1 (Efcc1) (Mus musculus (Mouse)).